The chain runs to 314 residues: Peroxidase 2 (314 aa).

Positions 1 to 23 are cleaved as a signal peptide; the sequence is MASASSVSLMLLVAAAMASAASA. At Q24 the chain carries Pyrrolidone carboxylic acid. 4 disulfides stabilise this stretch: C34–C109, C67–C72, C115–C310, and C194–C219. H65 acts as the Proton acceptor in catalysis. Positions 66, 69, 71, 73, and 75 each coordinate Ca(2+). N148 carries an N-linked (GlcNAc...) asparagine glycan. P157 lines the substrate pocket. N169 carries an N-linked (GlcNAc...) asparagine glycan. H187 lines the heme b pocket. T188 is a binding site for Ca(2+). N203 carries an N-linked (GlcNAc...) asparagine glycan. Positions 234, 237, and 242 each coordinate Ca(2+). N-linked (GlcNAc...) asparagine glycans are attached at residues N274 and N309.

It belongs to the peroxidase family. Classical plant (class III) peroxidase subfamily. The cofactor is Ca(2+). Heme b is required as a cofactor.

Its subcellular location is the secreted. It carries out the reaction 2 a phenolic donor + H2O2 = 2 a phenolic radical donor + 2 H2O. Its function is as follows. Removal of H(2)O(2), oxidation of toxic reductants, biosynthesis and degradation of lignin, suberization, auxin catabolism, response to environmental stresses such as wounding, pathogen attack and oxidative stress. These functions might be dependent on each isozyme/isoform in each plant tissue. This chain is Peroxidase 2 (PRX112), found in Oryza sativa subsp. japonica (Rice).